We begin with the raw amino-acid sequence, 557 residues long: Iron-sulfur cluster assembly SufBD family protein ABCI8, chloroplastic (557 aa).

A disordered region spans residues Met1 to Pro47. The transit peptide at Met1 to Arg52 directs the protein to the chloroplast. The span at Ser10–Pro24 shows a compositional bias: low complexity.

It belongs to the iron-sulfur cluster assembly SufBD family.

Its subcellular location is the plastid. The protein resides in the chloroplast. Involved in light signaling, probably by mediating the transport and correct distribution of protoporphyrin IX, a chlorophyll precursor, in response to far-red light. This chain is Iron-sulfur cluster assembly SufBD family protein ABCI8, chloroplastic (ABCI8), found in Arabidopsis thaliana (Mouse-ear cress).